Here is a 538-residue protein sequence, read N- to C-terminus: Chaperonin GroEL 2 (538 aa).

ATP is bound by residues 29 to 32 (TLGP), 86 to 90 (DGTTT), glycine 412, 479 to 481 (NAA), and aspartate 495.

Belongs to the chaperonin (HSP60) family. Forms a cylinder of 14 subunits composed of two heptameric rings stacked back-to-back. Interacts with the co-chaperonin GroES.

The protein localises to the cytoplasm. It carries out the reaction ATP + H2O + a folded polypeptide = ADP + phosphate + an unfolded polypeptide.. Its function is as follows. Together with its co-chaperonin GroES, plays an essential role in assisting protein folding. The GroEL-GroES system forms a nano-cage that allows encapsulation of the non-native substrate proteins and provides a physical environment optimized to promote and accelerate protein folding. The protein is Chaperonin GroEL 2 of Renibacterium salmoninarum (strain ATCC 33209 / DSM 20767 / JCM 11484 / NBRC 15589 / NCIMB 2235).